Here is a 194-residue protein sequence, read N- to C-terminus: Putative manganese efflux pump MntP (194 aa).

Helical transmembrane passes span 3-23 (PITTLLIGIAMSTDAFAAAIG), 37-57 (LYVAVIFGVIETATPIAGWLL), 65-85 (IATFDHWIAFGLLGGLGIHMI), 112-132 (LAATALATSIDAAAIGISMAF), 137-157 (IGIVAAVIGLCTFTMVIFGVM), and 170-190 (AEIVGGIILIIVGSTILYEHL).

The protein belongs to the MntP (TC 9.B.29) family.

Its subcellular location is the cell inner membrane. In terms of biological role, probably functions as a manganese efflux pump. The chain is Putative manganese efflux pump MntP from Xylella fastidiosa (strain M23).